Consider the following 327-residue polypeptide: MTSGSPKITNLLTRVKRIIPPLLDTFHKGQAGRVGVFGGCQHYTGAPYYSSMSSMLFGSDQSHIFCEKEAANVIKSYSPDLIVHPFLREKDKAGPEDSVDKCFELIKPMMGRLHAIVIGPGLGRDEWMQEIMAKVIEYARKNDMPMVIDADGLWLIQQRPELVSGYHNVILTPNVIEFKRLCDKLDIKSDGPDACNQLAGKLNLLIIQKGQSDIISDGATAYACSVPGGLKRCGGQGDILTGILATFLAWRHAYLSKEWDTEGNMDAKECLFLAAFGASACTRWCSRLAFKECGRATQSTDLVRHVGKAYNALMEDEIPSVEEKIKD.

In terms of domain architecture, YjeF C-terminal spans 11–313 (LLTRVKRIIP…RHVGKAYNAL (303 aa)). (6S)-NADPHX contacts are provided by residues G121 and 174-180 (NVIEFKR). ATP contacts are provided by residues 209–213 (KGQSD) and 228–237 (GGLKRCGGQG). D238 is a (6S)-NADPHX binding site.

The protein belongs to the NnrD/CARKD family. Mg(2+) is required as a cofactor.

It localises to the cytoplasm. It catalyses the reaction (6S)-NADHX + ATP = ADP + phosphate + NADH + H(+). It carries out the reaction (6S)-NADPHX + ATP = ADP + phosphate + NADPH + H(+). In terms of biological role, catalyzes the dehydration of the S-form of NAD(P)HX at the expense of ATP, which is converted to ADP. Together with NAD(P)HX epimerase, which catalyzes the epimerization of the S- and R-forms, the enzyme allows the repair of both epimers of NAD(P)HX, a damaged form of NAD(P)H that is a result of enzymatic or heat-dependent hydration. This chain is ATP-dependent (S)-NAD(P)H-hydrate dehydratase, found in Schizosaccharomyces pombe (strain 972 / ATCC 24843) (Fission yeast).